The primary structure comprises 229 residues: LexA repressor (229 aa).

Residues 28 to 48 constitute a DNA-binding region (H-T-H motif); the sequence is IREIGEALDIRSTNGVNDHLK. Active-site for autocatalytic cleavage activity residues include S147 and K184.

It belongs to the peptidase S24 family. Homodimer.

The catalysed reaction is Hydrolysis of Ala-|-Gly bond in repressor LexA.. Represses a number of genes involved in the response to DNA damage (SOS response), including recA and lexA. In the presence of single-stranded DNA, RecA interacts with LexA causing an autocatalytic cleavage which disrupts the DNA-binding part of LexA, leading to derepression of the SOS regulon and eventually DNA repair. The chain is LexA repressor from Anaeromyxobacter dehalogenans (strain 2CP-C).